The following is a 634-amino-acid chain: Putative peptidoglycan O-acetyltransferase YrhL (634 aa).

11 helical membrane passes run 10–30 (YIPGLDGLRAFAVLSVITYHL), 38–58 (GFIGVDIFFVLSGYLITSILL), 79–99 (RLLPAAYLMIFSTVVWVVLFD), 110–130 (AISSLFYMSNWWFIFHKLSYF), 145–165 (LAIEEQFYIIWPMFLVVGMYI), 172–192 (LAAVISLLVLCSAVMMSVLYE), 244–264 (FLAFCILVLCVYFTDEYEPFL), 270–290 (LFISVTAAILIACVCHPSSFL), 307–327 (YGIYLWHYPVIVLSTPVQEIG), 329–349 (PVFWHIVLKVIVTCILAELSY), and 385–405 (MSIGFIIFAILIFAGGLSGLA). The segment at 413–481 (KWTYSSQETN…SQQLKKPADT (69 aa)) is disordered. The segment covering 414–429 (WTYSSQETNADTSQAS) has biased composition (polar residues). Composition is skewed to basic and acidic residues over residues 430–447 (GDKKNAAADKKHNPEQKT) and 455–470 (KENKDSGQETHKKKDT).

The protein belongs to the acyltransferase 3 family.

The protein localises to the cell membrane. The polypeptide is Putative peptidoglycan O-acetyltransferase YrhL (yrhL) (Bacillus subtilis (strain 168)).